Consider the following 483-residue polypeptide: Glutamyl-tRNA(Gln) amidotransferase subunit A (483 aa).

Catalysis depends on charge relay system residues lysine 76 and serine 151. Residue serine 175 is the Acyl-ester intermediate of the active site.

It belongs to the amidase family. GatA subfamily. In terms of assembly, heterotrimer of A, B and C subunits.

The enzyme catalyses L-glutamyl-tRNA(Gln) + L-glutamine + ATP + H2O = L-glutaminyl-tRNA(Gln) + L-glutamate + ADP + phosphate + H(+). Allows the formation of correctly charged Gln-tRNA(Gln) through the transamidation of misacylated Glu-tRNA(Gln) in organisms which lack glutaminyl-tRNA synthetase. The reaction takes place in the presence of glutamine and ATP through an activated gamma-phospho-Glu-tRNA(Gln). This Coxiella burnetii (strain CbuK_Q154) (Coxiella burnetii (strain Q154)) protein is Glutamyl-tRNA(Gln) amidotransferase subunit A.